A 531-amino-acid polypeptide reads, in one-letter code: Acetate CoA-transferase YdiF (531 aa).

E333 serves as the catalytic 5-glutamyl coenzyme A thioester intermediate.

This sequence belongs to the 3-oxoacid CoA-transferase family. Homotetramer; dimer of dimers.

It carries out the reaction an acyl-CoA + acetate = a carboxylate + acetyl-CoA. Its function is as follows. CoA transferase having broad substrate specificity for short-chain acyl-CoA thioesters with the activity decreasing when the length of the carboxylic acid chain exceeds four carbons. Exhibits high activity with acetoacetyl-CoA, propionyl-CoA, crotonoyl-CoA or butyryl-CoA as donors, with acetate as an acceptor. When acetyl-CoA is used as the donor, propionate, acetoacetate, butyrate, isobutyrate, and 4-hydroxybutyrate can be utilized as acceptors but not isovalerate. May play a role in short-chain fatty acid metabolism in E.coli. The protein is Acetate CoA-transferase YdiF of Escherichia coli O157:H7.